A 160-amino-acid polypeptide reads, in one-letter code: Sec-independent protein translocase protein TatB (160 aa).

A helical membrane pass occupies residues 1-21 (MIDLGVSKIALIGAVALIVIG). 2 disordered regions span residues 70 to 100 (ARDVETSIQTSASDFEKSWSDATGSDASTAT) and 133 to 160 (RSGVRTKAQSGAARVARFRPQSGRSSSF). Over residues 89–100 (SDATGSDASTAT) the composition is skewed to polar residues.

This sequence belongs to the TatB family. As to quaternary structure, the Tat system comprises two distinct complexes: a TatABC complex, containing multiple copies of TatA, TatB and TatC subunits, and a separate TatA complex, containing only TatA subunits. Substrates initially bind to the TatABC complex, which probably triggers association of the separate TatA complex to form the active translocon.

The protein resides in the cell inner membrane. Part of the twin-arginine translocation (Tat) system that transports large folded proteins containing a characteristic twin-arginine motif in their signal peptide across membranes. Together with TatC, TatB is part of a receptor directly interacting with Tat signal peptides. TatB may form an oligomeric binding site that transiently accommodates folded Tat precursor proteins before their translocation. In Polaromonas sp. (strain JS666 / ATCC BAA-500), this protein is Sec-independent protein translocase protein TatB.